We begin with the raw amino-acid sequence, 388 residues long: Nocturnin (388 aa).

A Mg(2+)-binding site is contributed by Glu152. Substrate contacts are provided by residues Glu152, 176 to 178, Asn220, 243 to 246, 281 to 283, and His371; these read KPW, HLKA, and DFN.

Belongs to the CCR4/nocturin family. It depends on Mg(2+) as a cofactor. Expressed only in the photoreceptors of the retina. Expression is controlled by the retinal circadian clock.

Its subcellular location is the cytoplasm. It localises to the nucleus. It is found in the perinuclear region. The protein localises to the mitochondrion. The catalysed reaction is NADP(+) + H2O = phosphate + NAD(+). It catalyses the reaction NADPH + H2O = phosphate + NADH. Phosphatase which catalyzes the conversion of NADP(+) to NAD(+) and of NADPH to NADH. Shows a small preference for NADPH over NADP(+). Component of the circadian clock or downstream effector of clock function. Exhibits a high amplitude circadian rhythm with maximal levels in early evening. In constant darkness or constant light, the amplitude of the rhythm decreases. This Xenopus laevis (African clawed frog) protein is Nocturnin.